Reading from the N-terminus, the 296-residue chain is MLHLRSSQMLQMLESSLRKYLPESLKVYGTVFHMNQGNPFKLKALVDKWPDFNTVVVRPREQEMGDDLDQHTNTYQIYSKDPKHCLEFLGTPDVINWKQHLQIQSSQSNLNEAIMDLAAGKMVKVKRTQCILYMMPETAKKLVPSLLEDKEYLDHQSGRPRAIDQEMFKLSTLDVTHAPLVDKFWQFGGNERSQRFIGRCIQIFPSSCLLGPEGTPVSWALMDQTGEIRMAGTVPDYRAQGLISHIIYAQTLAMDKRGYPVYNHTEQTNKVIQKMSHTLHHVPMPCDWNQWYCAPL.

At Lys41 the chain carries N6-acetyllysine; alternate. Lys41 is modified (N6-succinyllysine; alternate). Lys43 carries the post-translational modification N6-acetyllysine. Lys48 bears the N6-acetyllysine; alternate mark. An N6-succinyllysine; alternate modification is found at Lys48. An N6-acetyllysine mark is found at Lys80 and Lys83. Lys183 and Lys256 each carry N6-acetyllysine; alternate. Residues Lys183 and Lys256 each carry the N6-succinyllysine; alternate modification.

The protein belongs to the glycine N-acyltransferase family.

The protein resides in the mitochondrion. It carries out the reaction an acyl-CoA + glycine = an N-acylglycine + CoA + H(+). Mitochondrial acyltransferase which transfers the acyl group to the N-terminus of glycine. Can conjugate a multitude of substrates to form a variety of N-acylglycines. The chain is Glycine N-acyltransferase-like protein (Gm4952) from Mus musculus (Mouse).